The following is a 65-amino-acid chain: Large ribosomal subunit protein bL35 (65 aa).

The disordered stretch occupies residues 1–46 (MPKMKTRQSAAKRYEVTGSGKLRRRRAGKNHLLQHKSAARKRSLST). Basic residues predominate over residues 21–44 (KLRRRRAGKNHLLQHKSAARKRSL).

The protein belongs to the bacterial ribosomal protein bL35 family.

The polypeptide is Large ribosomal subunit protein bL35 (Gloeobacter violaceus (strain ATCC 29082 / PCC 7421)).